The following is a 617-amino-acid chain: MAGALENATKEIKRLSLEDTHESQYGQIYSVSGPVVVAENMIGCAMYELVKVGHDNLVGEVIRINGDKATIQVYEETAGVTVGDPVLRTGKPLSVELGPGLMETIYDGIQRPLKAIKDESQSIYIPRGIDVPALSRTTQYDFTPGKLKVGDHITGGDIFGSIYENSLLDDHKILLPPRARGTITSIAESGSYNVEDTVLEVEFDGKKHKYSMMHTWPVRVPRPVAEKLSADYPLLTGQRVLDSLFPCVQGGTTCIPGAFGCGKTVISQSLSKFSNSDVIIYVGCGERGNEMAEVLMEFPELYTEISGRKEPIMKRTTLVANTSNMPVAAREASIYTGITLAEYFRDQGKNVSMIADSSSRWAEALREISGRLGEMPADQGFPAYLGAKLASFYERAGKATALGSPDRIGSVSIVAAVSPAGGDFSDPVTTATLGITQVFWGLDKKLAQRKHFPSINTSVSYSKYTNVLNKYYDSNYPEFAQLRDKIREILSNAEELEQVVQLVGKSALSDSDKITLDVATLIKEDFLQQNGYSSYDAFCPIWKTFDMMRAFISYYDEAQKAVANGAQWSKLAESTSDVKHSVSSAKFFEPSRGQKEGEKEFSELLSTISERFAEASE.

257–264 contacts ATP; that stretch reads GAFGCGKT.

It belongs to the ATPase alpha/beta chains family. In terms of assembly, V-ATPase is a heteromultimeric enzyme composed of a peripheral catalytic V1 complex (components A to H) attached to an integral membrane V0 proton pore complex (components: a, c, c', c'', d, e, f and VOA1). Is a probable target for sumoylation.

It localises to the vacuole membrane. It carries out the reaction ATP + H2O + 4 H(+)(in) = ADP + phosphate + 5 H(+)(out). Its function is as follows. Catalytic subunit of the V1 complex of vacuolar(H+)-ATPase (V-ATPase), a multisubunit enzyme composed of a peripheral complex (V1) that hydrolyzes ATP and a membrane integral complex (V0) that translocates protons. V-ATPase is responsible for acidifying and maintaining the pH of intracellular compartments. Mediates oxidative stress response, filamentous growth, and plays an important role in virulence. In Candida albicans (strain SC5314 / ATCC MYA-2876) (Yeast), this protein is V-type proton ATPase catalytic subunit A.